We begin with the raw amino-acid sequence, 100 residues long: Urease subunit gamma (100 aa).

It belongs to the urease gamma subunit family. Heterotrimer of UreA (gamma), UreB (beta) and UreC (alpha) subunits. Three heterotrimers associate to form the active enzyme.

Its subcellular location is the cytoplasm. The enzyme catalyses urea + 2 H2O + H(+) = hydrogencarbonate + 2 NH4(+). It participates in nitrogen metabolism; urea degradation; CO(2) and NH(3) from urea (urease route): step 1/1. This Pseudomonas putida (strain W619) protein is Urease subunit gamma.